The sequence spans 516 residues: Chromosomal replication initiator protein DnaA (516 aa).

The tract at residues 1-72 is domain I, interacts with DnaA modulators; the sequence is MSLEHWNLCL…LLSEFAGDDL (72 aa). Residues 72–179 are domain II; sequence LAPALKLAVK…QVEGGINHGA (108 aa). The segment at 180-396 is domain III, AAA+ region; it reads NLNNSFTFDN…GALKRVIANS (217 aa). ATP is bound by residues Gly224, Gly226, Lys227, and Thr228. The interval 397–516 is domain IV, binds dsDNA; the sequence is HFTGRAITPD…YKQLMRILTT (120 aa).

Belongs to the DnaA family. Oligomerizes as a right-handed, spiral filament on DNA at oriC.

The protein resides in the cytoplasm. Functionally, plays an essential role in the initiation and regulation of chromosomal replication. ATP-DnaA binds to the origin of replication (oriC) to initiate formation of the DNA replication initiation complex once per cell cycle. Binds the DnaA box (a 9 base pair repeat at the origin) and separates the double-stranded (ds)DNA. Forms a right-handed helical filament on oriC DNA; dsDNA binds to the exterior of the filament while single-stranded (ss)DNA is stabiized in the filament's interior. The ATP-DnaA-oriC complex binds and stabilizes one strand of the AT-rich DNA unwinding element (DUE), permitting loading of DNA polymerase. After initiation quickly degrades to an ADP-DnaA complex that is not apt for DNA replication. Binds acidic phospholipids. This Marinomonas sp. (strain MWYL1) protein is Chromosomal replication initiator protein DnaA.